Consider the following 155-residue polypeptide: Glycosylation-dependent cell adhesion molecule 1 (155 aa).

Residues 1 to 18 (MKFFAVLLLASLAATSLA) form the signal peptide. T34 carries O-linked (GalNAc...) threonine glycosylation. 5 positions are modified to phosphoserine: S48, S53, S57, S59, and S65. The interval 74–109 (ARRHQNQNPKLLHPVPQESSFRNTATQSEETKELTP) is disordered. Positions 90-101 (QESSFRNTATQS) are enriched in polar residues.

Belongs to the PP3/GlyCAM-1 family. As to expression, highly expressed in whey fraction of camel milk.

The sequence is that of Glycosylation-dependent cell adhesion molecule 1 (GLYCAM1) from Camelus dromedarius (Dromedary).